The sequence spans 549 residues: uncharacterized protein (549 aa).

A run of 12 helical transmembrane segments spans residues 27 to 47 (ILRF…YVFV), 108 to 128 (PIVV…GVIF), 146 to 166 (TGLV…LAIA), 197 to 217 (AVAI…IPML), 233 to 253 (FIAI…FLLV), 265 to 285 (VAAI…LISL), 308 to 328 (FLVI…LSIL), 352 to 372 (LVLL…IFGV), 399 to 419 (TLLV…VGLG), 434 to 454 (LMLA…VAIG), 472 to 492 (IVSL…FQAI), and 501 to 521 (IFIW…VLIG).

Its subcellular location is the cell membrane. This is an uncharacterized protein from Mycoplasma pneumoniae (strain ATCC 29342 / M129 / Subtype 1) (Mycoplasmoides pneumoniae).